Reading from the N-terminus, the 430-residue chain is Potassium channel subfamily K member 12 (430 aa).

At 1 to 38 (MSSRSPRPPPRRSRRRLPRPSCCCCCCRRSHLNEDTGR) the chain is on the cytoplasmic side. Residues 11-16 (RRSRRR) are ER retention/retrieval signal. The helical transmembrane segment at 39 to 59 (FVLLAALIGLYLVAGATVFSA) threads the bilayer. Asparagine 78 carries N-linked (GlcNAc...) asparagine glycosylation. The pore-forming intramembrane region spans 114–134 (WDFPGAFYFVGTVVSTIGFGM). Residues threonine 129, isoleucine 130, and glycine 131 each coordinate K(+). Residues 129-134 (TIGFGM) are selectivity filter 1. The helical transmembrane segment at 145-165 (FLIAYGLFGCAGTILFFNLFL) threads the bilayer. Residues 166–212 (ERIISLLAFIMRACRERQLRRSGLLPATFRRGSALSEADSLAGWKPS) lie on the Cytoplasmic side of the membrane. A helical membrane pass occupies residues 213–233 (VYHVLLILGLFAVLLSCCASA). An intramembrane region (pore-forming) is located at residues 243 to 263 (YVDSLYFCFVTFSTIGFGDLV). K(+)-binding residues include threonine 256, isoleucine 257, glycine 258, and phenylalanine 259. A selectivity filter 2 region spans residues 256-261 (TIGFGD). A helical membrane pass occupies residues 282–302 (LFILLGVCCIYSLFNVISILI). Over 303–430 (KQVLNWMLRK…NRLAETSASR (128 aa)) the chain is Cytoplasmic.

This sequence belongs to the two pore domain potassium channel (TC 1.A.1.8) family. As to quaternary structure, homodimer. Heterodimer with KCNK13.

It is found in the cell membrane. Its subcellular location is the endoplasmic reticulum membrane. The catalysed reaction is K(+)(in) = K(+)(out). In terms of biological role, k(+) channel subunit that may homo- and heterodimerize to form functional channels with distinct regulatory and gating properties. Can heterodimerize with KCNK13 subunit to conduct K(+) outward rectifying currents at the plasma membrane. The homodimers are mainly retained in the endoplasmic reticulum compartment and may be targeted to the cell surface upon phosphorylation or other activation signals yet to be elucidated. This chain is Potassium channel subfamily K member 12, found in Homo sapiens (Human).